Here is a 607-residue protein sequence, read N- to C-terminus: Translation initiation factor IF-2 (607 aa).

The interval 54-93 (SAPQAQDSTPVAETPAAAQPAAPQAASSQPAAAQAAQAVA) is disordered. Residues 62 to 93 (TPVAETPAAAQPAAPQAASSQPAAAQAAQAVA) are compositionally biased toward low complexity. A tr-type G domain is found at 108-281 (HRAPVVTIMG…ELEDLRADPK (174 aa)). Positions 117-124 (GHVDHGKT) are G1. 117–124 (GHVDHGKT) is a binding site for GTP. The interval 142 to 146 (GITQH) is G2. The G3 stretch occupies residues 163 to 166 (DTPG). Residues 163 to 167 (DTPGH) and 217 to 220 (NKVD) contribute to the GTP site. A G4 region spans residues 217–220 (NKVD). Residues 253 to 255 (SAK) form a G5 region.

It belongs to the TRAFAC class translation factor GTPase superfamily. Classic translation factor GTPase family. IF-2 subfamily.

It localises to the cytoplasm. Functionally, one of the essential components for the initiation of protein synthesis. Protects formylmethionyl-tRNA from spontaneous hydrolysis and promotes its binding to the 30S ribosomal subunits. Also involved in the hydrolysis of GTP during the formation of the 70S ribosomal complex. This is Translation initiation factor IF-2 from Deinococcus deserti (strain DSM 17065 / CIP 109153 / LMG 22923 / VCD115).